A 443-amino-acid chain; its full sequence is Glutamine synthetase (443 aa).

The GS beta-grasp domain maps to 16–97; it reads KRIKFVQLIF…VYGYIYKDGK (82 aa). The region spanning 103-443 is the GS catalytic domain; sequence PRGVLRRTLE…EWELERYFFI (341 aa). Mg(2+) contacts are provided by Glu-126 and Glu-128. Glu-176 contacts ATP. 2 residues coordinate Mg(2+): Glu-181 and Glu-188. Gly-233 lines the L-glutamate pocket. His-237 contacts Mg(2+). Residues 239-241 and Ser-241 each bind ATP; that span reads HIS. 3 residues coordinate L-glutamate: Arg-287, Glu-293, and Arg-305. Residues Arg-305 and Arg-310 each coordinate ATP. A Mg(2+)-binding site is contributed by Glu-322. Position 324 (Arg-324) interacts with L-glutamate.

This sequence belongs to the glutamine synthetase family. In terms of assembly, oligomer of 12 subunits arranged in the form of two hexagons. Requires Mg(2+) as cofactor.

The protein localises to the cytoplasm. The catalysed reaction is L-glutamate + NH4(+) + ATP = L-glutamine + ADP + phosphate + H(+). Its function is as follows. Probably involved in nitrogen metabolism via ammonium assimilation. Catalyzes the ATP-dependent biosynthesis of glutamine from glutamate and ammonia. The polypeptide is Glutamine synthetase (Pyrococcus horikoshii (strain ATCC 700860 / DSM 12428 / JCM 9974 / NBRC 100139 / OT-3)).